The chain runs to 239 residues: Non-classical arabinogalactan protein 30 (239 aa).

A signal peptide spans M1–T24. An N-linked (GlcNAc...) asparagine glycan is attached at N106.

It belongs to the non-classical AGP family. As to expression, specifically expressed in root tips.

It is found in the secreted. The protein localises to the cell wall. In terms of biological role, proteoglycan required for the timing of seed germination. May function in the abscisic acid (ABA) response. The chain is Non-classical arabinogalactan protein 30 from Arabidopsis thaliana (Mouse-ear cress).